A 63-amino-acid chain; its full sequence is Protein DsrB (63 aa).

The protein belongs to the DsrB family.

The protein is Protein DsrB of Yersinia pseudotuberculosis serotype O:1b (strain IP 31758).